The chain runs to 122 residues: Flagellar protein FliT (122 aa).

The required for homodimerization stretch occupies residues 1–50 (MTSTVEFINRWQRIALLSQSLLELAQRGEWDLLLQQEVSYLQRIETVMEK). Residues 60-98 (IQDMVAGYIKQTLDNEQLLKGLLQQRLDELSSLIGQSTR) are fliD binding.

It belongs to the FliT family. As to quaternary structure, homodimer. Interacts with FliD and FlhC.

It is found in the cytoplasm. It localises to the cytosol. Functionally, dual-function protein that regulates the transcription of class 2 flagellar operons and that also acts as an export chaperone for the filament-capping protein FliD. As a transcriptional regulator, acts as an anti-FlhDC factor; it directly binds FlhC, thus inhibiting the binding of the FlhC/FlhD complex to class 2 promoters, resulting in decreased expression of class 2 flagellar operons. As a chaperone, effects FliD transition to the membrane by preventing its premature polymerization, and by directing it to the export apparatus. This Salmonella paratyphi A (strain AKU_12601) protein is Flagellar protein FliT.